Here is a 255-residue protein sequence, read N- to C-terminus: Hydroxyacylglutathione hydrolase (255 aa).

The Zn(2+) site is built by histidine 56, histidine 58, aspartate 60, histidine 61, histidine 114, aspartate 133, and histidine 171.

Belongs to the metallo-beta-lactamase superfamily. Glyoxalase II family. Monomer. Zn(2+) is required as a cofactor.

The catalysed reaction is an S-(2-hydroxyacyl)glutathione + H2O = a 2-hydroxy carboxylate + glutathione + H(+). It functions in the pathway secondary metabolite metabolism; methylglyoxal degradation; (R)-lactate from methylglyoxal: step 2/2. In terms of biological role, thiolesterase that catalyzes the hydrolysis of S-D-lactoyl-glutathione to form glutathione and D-lactic acid. In Rhodopseudomonas palustris (strain ATCC BAA-98 / CGA009), this protein is Hydroxyacylglutathione hydrolase.